Reading from the N-terminus, the 243-residue chain is 3-deoxy-manno-octulosonate cytidylyltransferase (243 aa).

The protein belongs to the KdsB family.

It localises to the cytoplasm. It catalyses the reaction 3-deoxy-alpha-D-manno-oct-2-ulosonate + CTP = CMP-3-deoxy-beta-D-manno-octulosonate + diphosphate. The protein operates within nucleotide-sugar biosynthesis; CMP-3-deoxy-D-manno-octulosonate biosynthesis; CMP-3-deoxy-D-manno-octulosonate from 3-deoxy-D-manno-octulosonate and CTP: step 1/1. Its pathway is bacterial outer membrane biogenesis; lipopolysaccharide biosynthesis. Functionally, activates KDO (a required 8-carbon sugar) for incorporation into bacterial lipopolysaccharide in Gram-negative bacteria. The protein is 3-deoxy-manno-octulosonate cytidylyltransferase of Bartonella bacilliformis (strain ATCC 35685 / KC583 / Herrer 020/F12,63).